Reading from the N-terminus, the 394-residue chain is GDSL esterase/lipase At1g31550 (394 aa).

Residues 1–27 form the signal peptide; that stretch reads MASLDSHVLMKLGSLFLSTLFVSIVSS. Serine 43 serves as the catalytic Nucleophile. 3 N-linked (GlcNAc...) asparagine glycosylation sites follow: asparagine 138, asparagine 290, and asparagine 322. Catalysis depends on residues aspartate 345 and histidine 348.

It belongs to the 'GDSL' lipolytic enzyme family.

The protein resides in the secreted. The sequence is that of GDSL esterase/lipase At1g31550 from Arabidopsis thaliana (Mouse-ear cress).